A 283-amino-acid chain; its full sequence is Bifunctional protein FolD (283 aa).

Residues 165–167 (GRS), S190, and I231 contribute to the NADP(+) site.

This sequence belongs to the tetrahydrofolate dehydrogenase/cyclohydrolase family. Homodimer.

It carries out the reaction (6R)-5,10-methylene-5,6,7,8-tetrahydrofolate + NADP(+) = (6R)-5,10-methenyltetrahydrofolate + NADPH. It catalyses the reaction (6R)-5,10-methenyltetrahydrofolate + H2O = (6R)-10-formyltetrahydrofolate + H(+). It participates in one-carbon metabolism; tetrahydrofolate interconversion. In terms of biological role, catalyzes the oxidation of 5,10-methylenetetrahydrofolate to 5,10-methenyltetrahydrofolate and then the hydrolysis of 5,10-methenyltetrahydrofolate to 10-formyltetrahydrofolate. This is Bifunctional protein FolD from Janthinobacterium sp. (strain Marseille) (Minibacterium massiliensis).